Here is a 270-residue protein sequence, read N- to C-terminus: MAFAIASALTSTLTLSTSRVQNPTQRRPHVASTSSTGGRLMRERLVVVRAGKEVSSVCEPLPPDRPLWFPGSSPPEWLDGSLPGDFGFDPLGLGSDPDTLKWFAQAELIHSRWAMLAVTGIIIPECLERLGFIENFSWYDAGSREYFADSTTLFVAQMVLMGWAEGRRWADLIKPGSVDIEPKYPHKVNPKPDVGYPGGLWFDFMMWGRGSPEPVMVLRTKEIKNGRLAMLAFLGFCFQATYTSQDPIENLMAHLADPGHCNVFSAFTSH.

Residues 1–33 (MAFAIASALTSTLTLSTSRVQNPTQRRPHVAST) constitute a chloroplast transit peptide. Residues 16-36 (STSRVQNPTQRRPHVASTSST) form a disordered region. A compositionally biased stretch (polar residues) spans 19-36 (RVQNPTQRRPHVASTSST). Residue tryptophan 68 coordinates chlorophyll b. Chlorophyll a contacts are provided by phenylalanine 88 and glutamate 107. Arginine 112 provides a ligand contact to chlorophyll b. The helical transmembrane segment at 146 to 164 (YFADSTTLFVAQMVLMGWA) threads the bilayer. 2 residues coordinate chlorophyll b: glutamate 165 and arginine 168. Positions 221, 222, 225, 227, 239, and 254 each coordinate chlorophyll a. A helical membrane pass occupies residues 228-244 (LAMLAFLGFCFQATYTS).

The protein belongs to the light-harvesting chlorophyll a/b-binding (LHC) protein family. As to quaternary structure, the LHC complex consists of chlorophyll a-b binding proteins. Homodimer. Binds pigments. Element of the NAD(P)H dehydrogenase-photosystem I supercomplex (NDH-PSI). Binds at least 14 chlorophylls (8 Chl-a and 6 Chl-b) and carotenoids such as lutein and neoxanthin. is required as a cofactor. Post-translationally, photoregulated by reversible phosphorylation of its threonine residues.

It is found in the plastid. Its subcellular location is the chloroplast thylakoid membrane. Functionally, the light-harvesting complex (LHC) functions as a light receptor, it captures and delivers excitation energy to photosystems with which it is closely associated. Seems involved in the function of the photosystem I in low light conditions, when other LHCA proteins are less abundant. Required, together with LHCA5, for the formation of a full-size NAD(P)H dehydrogenase-photosystem I supercomplex (NDH-PSI) that triggers cyclic and chlororespiratory electron transport in chloroplast thylakoids, especially under stress conditions (e.g. increased light intensity). In Arabidopsis thaliana (Mouse-ear cress), this protein is Photosystem I chlorophyll a/b-binding protein 6, chloroplastic.